Reading from the N-terminus, the 198-residue chain is Segregation and condensation protein B (198 aa).

The segment at 167-198 is disordered; it reads PKLADPEAEDPDQSEMDLFFDRFNQSKEQEEE. Residues 172–181 show a composition bias toward acidic residues; sequence PEAEDPDQSE.

This sequence belongs to the ScpB family. In terms of assembly, homodimer. Homodimerization may be required to stabilize the binding of ScpA to the Smc head domains. Component of a cohesin-like complex composed of ScpA, ScpB and the Smc homodimer, in which ScpA and ScpB bind to the head domain of Smc. The presence of the three proteins is required for the association of the complex with DNA.

It is found in the cytoplasm. Its function is as follows. Participates in chromosomal partition during cell division. May act via the formation of a condensin-like complex containing Smc and ScpA that pull DNA away from mid-cell into both cell halves. The protein is Segregation and condensation protein B of Listeria innocua serovar 6a (strain ATCC BAA-680 / CLIP 11262).